A 284-amino-acid chain; its full sequence is tRNA uridine(34) hydroxylase (284 aa).

In terms of domain architecture, Rhodanese spans 132-226; it reads TGRPVVMLDT…YFEEVGGAHY (95 aa). The active-site Cysteine persulfide intermediate is Cys186.

The protein belongs to the TrhO family.

The catalysed reaction is uridine(34) in tRNA + AH2 + O2 = 5-hydroxyuridine(34) in tRNA + A + H2O. Functionally, catalyzes oxygen-dependent 5-hydroxyuridine (ho5U) modification at position 34 in tRNAs. The chain is tRNA uridine(34) hydroxylase from Burkholderia lata (strain ATCC 17760 / DSM 23089 / LMG 22485 / NCIMB 9086 / R18194 / 383).